Here is a 904-residue protein sequence, read N- to C-terminus: Toll-like receptor 3 (904 aa).

Positions 1-26 (MSRPLPYHIHFFSGLLTCWILCTSSA) are cleaved as a signal peptide. The region spanning 27–52 (HKCTVRHEVADCSHLKLTQIPDDLPT) is the LRRNT domain. Topologically, residues 27-705 (HKCTVRHEVA…PCKDSAPFEL (679 aa)) are lumenal. An intrachain disulfide couples cysteine 29 to cysteine 38. Asparagine 53, asparagine 58, and asparagine 71 each carry an N-linked (GlcNAc...) asparagine glycan. LRR repeat units follow at residues 53–74 (NITV…NFTR), 77–98 (QLTT…LCQS), 101–122 (WLEI…TFIF), 125–146 (NLTE…PFKN), 149–170 (NLIK…TQLQ), and 173–194 (NLQE…EFDF). Residues cysteine 96 and cysteine 123 are joined by a disulfide bond. N-linked (GlcNAc...) asparagine glycosylation is present at asparagine 125. An N-linked (GlcNAc...) asparagine glycan is attached at asparagine 197. LRR repeat units follow at residues 199–220 (SLKR…CFHT) and 223–245 (ELSG…LCLE). Residues asparagine 248, asparagine 253, asparagine 276, and asparagine 292 are each glycosylated (N-linked (GlcNAc...) asparagine). LRR repeat units follow at residues 250–271 (SIEN…TFDG), 276–297 (NLTT…SFAW), 300–321 (HLEY…SFYG), 324–345 (NLRR…TSLP), 357–378 (CLEY…TFTG), 381–401 (RLKF…TNET), 409–430 (PLLL…AFSW), 433–455 (HLEV…EWRG), 466–487 (YNKY…QRLM), 508–529 (NLVI…LLKG), 532–553 (KLEI…ANPG), 564–585 (HLHI…AFKD), 588–609 (ELKS…VFDN), and 612–633 (SLKS…VFGP). Residue asparagine 399 is glycosylated (N-linked (GlcNAc...) asparagine). N-linked (GlcNAc...) asparagine glycans are attached at residues asparagine 637, asparagine 663, and asparagine 668. The 54-residue stretch at 646–699 (NPFDCTCESIAWFVNWINITHTNISELSNHYLCNTPPQYHGYPVMLFDVSPCKD) folds into the LRRCT domain. 2 disulfide bridges follow: cysteine 650-cysteine 678 and cysteine 652-cysteine 697. A helical transmembrane segment spans residues 706–726 (LFMININILLIFIFIVLLIHF). At 727–904 (EGWRISFYWN…VALGSRNSAH (178 aa)) the chain is on the cytoplasmic side. In terms of domain architecture, TIR spans 754 to 897 (FEYAAYIIHA…AFHHKLKVAL (144 aa)). Tyrosine 759 bears the Phosphotyrosine mark. Glycyl lysine isopeptide (Lys-Gly) (interchain with G-Cter in ubiquitin) cross-links involve residues lysine 765, lysine 812, and lysine 831. The residue at position 858 (tyrosine 858) is a Phosphotyrosine.

This sequence belongs to the Toll-like receptor family. As to quaternary structure, monomer and homodimer; dimerization is triggered by ligand-binding, the signaling unit is composed of one ds-RNA of around 40 bp and two TLR3 molecules, and lateral clustering of signaling units along the length of the ds-RNA ligand is required for TLR3 signal transduction. Interacts (via transmembrane domain) with UNC93B1; the interaction is required for transport from the ER to the endosomes. Interacts with TICAM1 (via the TIR domain) in response to poly(I:C) and this interaction is enhanced in the presence of WDFY1. Interacts with SRC; upon binding of double-stranded RNA. The tyrosine-phosphorylated form (via TIR domain) interacts with WDFY1 (via WD repeat 2) in response to poly(I:C). TLR3 signaling requires a proteolytic cleavage mediated by cathepsins CTSB and CTSH, the cleavage occurs between amino acids 252 and 346. The cleaved form of TLR3 is the predominant form found in endosomes. In terms of processing, ubiquitinated by TRIM3; leading to recognition and sorting of polyubiquitinated TLR3 by the ESCRT complexes. Ubiquitinated by ZNRF1 via 'Lys-63'-linked ubiquitin chains; leading to TLR3 lysosomal trafficking and degradation. Ubiquitinated by RNF170 at Lys-765 via 'Lys-48'-linked ubiquitin chains; leading to TLR3 proteasomal degradation.

The protein localises to the endoplasmic reticulum membrane. It is found in the endosome membrane. It localises to the early endosome. Its function is as follows. Key component of innate and adaptive immunity. TLRs (Toll-like receptors) control host immune response against pathogens through recognition of molecular patterns specific to microorganisms. TLR3 is a nucleotide-sensing TLR which is activated by double-stranded RNA, a sign of viral infection. Acts via the adapter TRIF/TICAM1, leading to NF-kappa-B activation, IRF3 nuclear translocation, cytokine secretion and the inflammatory response. The polypeptide is Toll-like receptor 3 (TLR3) (Bos taurus (Bovine)).